A 469-amino-acid polypeptide reads, in one-letter code: 24-hydroxycholesterol 7-alpha-hydroxylase (469 aa).

Positions 1-23 (MELISPTVIIILGCLALFLLLQR) are cleaved as a signal peptide. The next 3 membrane-spanning stretches (helical) occupy residues 267 to 287 (GLLL…WTLA), 352 to 372 (VEIL…PFWL), and 412 to 432 (FQCP…ILIL). Cys414 is a binding site for heme.

The protein belongs to the cytochrome P450 family. Heme is required as a cofactor. In terms of tissue distribution, liver specific.

It is found in the endoplasmic reticulum membrane. The protein localises to the microsome membrane. It catalyses the reaction (24S)-hydroxycholesterol + reduced [NADPH--hemoprotein reductase] + O2 = (24S)-7alpha-dihydroxycholesterol + oxidized [NADPH--hemoprotein reductase] + H2O + H(+). It functions in the pathway steroid metabolism; cholesterol degradation. It participates in lipid metabolism; bile acid biosynthesis. A cytochrome P450 monooxygenase involved in neural cholesterol clearance through bile acid synthesis. Catalyzes 7-alpha hydroxylation of (24S)-hydroxycholesterol, a neural oxysterol that is metabolized to bile acids in the liver. Mechanistically, uses molecular oxygen inserting one oxygen atom into a substrate, and reducing the second into a water molecule, with two electrons provided by NADPH via cytochrome P450 reductase (CPR; NADPH-ferrihemoprotein reductase). In Homo sapiens (Human), this protein is 24-hydroxycholesterol 7-alpha-hydroxylase.